We begin with the raw amino-acid sequence, 25 residues long: Large ribosomal subunit protein uL29 (25 aa).

It belongs to the universal ribosomal protein uL29 family.

The protein is Large ribosomal subunit protein uL29 (rpmC) of Brevundimonas vesicularis (Pseudomonas vesicularis).